The chain runs to 344 residues: Melanocyte-stimulating hormone receptor (344 aa).

At 1–37 the chain is on the extracellular side; sequence MPMQGAQRKLLGSLNSTPTATSNLGLAANHTGAPCLE. Residue Asn29 is glycosylated (N-linked (GlcNAc...) asparagine). Residues 38-63 form a helical membrane-spanning segment; the sequence is VPIPDGLFLSLGLVSLVENVLVVAAI. The Cytoplasmic portion of the chain corresponds to 64 to 72; it reads AKNRNLHSS. A helical membrane pass occupies residues 73-93; that stretch reads MYCFICCLAVSDLLVSGSNML. Topologically, residues 94–118 are extracellular; the sequence is ETAIILLLEAGALVTRASVVQQLHN. A helical transmembrane segment spans residues 119-140; that stretch reads TIDVLTCSSMLCSLCFLGAIAV. The Cytoplasmic portion of the chain corresponds to 141 to 163; sequence DRYISIFYALRYHSIMTLPRAQR. Residues 164–183 form a helical membrane-spanning segment; the sequence is AIAAIWVASVLSSTLFITYY. Residues 184 to 191 lie on the Extracellular side of the membrane; it reads DHAAVLLC. The helical transmembrane segment at 192-211 threads the bilayer; it reads LVVFFLAMLVLMAVLYVHML. Over 212–240 the chain is Cytoplasmic; the sequence is ARACQHAQGIIRLHKRQPPAHKGFGLRGA. A helical transmembrane segment spans residues 241 to 266; that stretch reads ATLTILLGIFFLCWGPFFLHLTLVVF. Residues 267–279 lie on the Extracellular side of the membrane; it reads CPQHMTCSCIFKN. Residues 280–300 form a helical membrane-spanning segment; the sequence is FKVFLTLIICNTIIDPLIYAF. Residues 301–344 lie on the Cytoplasmic side of the membrane; it reads RSQELRRTLKEVLLCSRWPGCWAEGGGDSVWPGSCVTLRGPLPP. Cys315 is lipidated: S-palmitoyl cysteine.

The protein belongs to the G-protein coupled receptor 1 family. As to quaternary structure, interacts with MGRN1, but does not undergo MGRN1-mediated ubiquitination; this interaction competes with GNAS-binding and thus inhibits agonist-induced cAMP production. Interacts with OPN3; the interaction results in a decrease in MC1R-mediated cAMP signaling and ultimately a decrease in melanin production in melanocytes.

It is found in the cell membrane. Its function is as follows. Receptor for MSH (alpha, beta and gamma) and ACTH. The activity of this receptor is mediated by G proteins which activate adenylate cyclase. Mediates melanogenesis, the production of eumelanin (black/brown) and phaeomelanin (red/yellow), via regulation of cAMP signaling in melanocytes. In Callimico goeldii (Goeldi's marmoset), this protein is Melanocyte-stimulating hormone receptor (MC1R).